Consider the following 218-residue polypeptide: Small ribosomal subunit protein uS3c (218 aa).

The 72-residue stretch at 47–118 (VQKNMRISSG…RLNIAITRVA (72 aa)) folds into the KH type-2 domain.

It belongs to the universal ribosomal protein uS3 family. As to quaternary structure, part of the 30S ribosomal subunit.

Its subcellular location is the plastid. The protein resides in the chloroplast. The sequence is that of Small ribosomal subunit protein uS3c (rps3) from Calycanthus floridus var. glaucus (Eastern sweetshrub).